The primary structure comprises 177 residues: Ecotin (177 aa).

An N-terminal signal peptide occupies residues 1 to 23; that stretch reads MQASIQNRIFFGLVVLWSTTVLE. Cysteines 83 and 122 form a disulfide.

This sequence belongs to the protease inhibitor I11 (ecotin) family. As to quaternary structure, homodimer.

It is found in the periplasm. General inhibitor of family S1 serine proteases. This chain is Ecotin, found in Prochlorococcus marinus (strain MIT 9313).